A 97-amino-acid polypeptide reads, in one-letter code: Antitoxin YafN (97 aa).

Belongs to the phD/YefM antitoxin family. As to quaternary structure, probably forms a complex with the mRNA interferase YafO which inhibits the mRNA interferase activity.

Functionally, antitoxin component of a type II toxin-antitoxin (TA) system. Functions as an mRNA interferase antitoxin; overexpression prevents YafO-mediated cessation of cell growth and inhibition of cell proliferation. The chain is Antitoxin YafN (yafN) from Escherichia coli (strain K12).